Here is an 862-residue protein sequence, read N- to C-terminus: Kinesin-like protein KIN-7E (862 aa).

Residues 24 to 346 (KILVLVRLRP…LLFACCAKEV (323 aa)) enclose the Kinesin motor domain. 110–117 (GQTSSGKT) contacts ATP. A coiled-coil region spans residues 355–428 (VMSDKALVKQ…RLEDFMKMVE (74 aa)). Disordered regions lie at residues 463–505 (RTSF…QSEE) and 542–632 (ANGE…TPLV). Polar residues predominate over residues 465–476 (SFISDGTSTPLS). Basic and acidic residues predominate over residues 494 to 505 (MSPRHSGDQSEE). A compositionally biased stretch (polar residues) spans 612 to 621 (DSMTSRGSDS). Lys734 is covalently cross-linked (Glycyl lysine isopeptide (Lys-Gly) (interchain with G-Cter in ubiquitin)).

The protein belongs to the TRAFAC class myosin-kinesin ATPase superfamily. Kinesin family. KIN-7 subfamily.

This Arabidopsis thaliana (Mouse-ear cress) protein is Kinesin-like protein KIN-7E.